A 1175-amino-acid chain; its full sequence is 1-phosphatidylinositol 4,5-bisphosphate phosphodiesterase beta-4 (1175 aa).

The residue at position 2 (alanine 2) is an N-acetylalanine. A PI-PLC X-box domain is found at 313–463; sequence QEMDHPLAHY…LKRKILIKNK (151 aa). Active-site residues include histidine 328 and histidine 375. The interval 482 to 511 is disordered; sequence EAGESASPANILEDDNEEEIESADQEEEAH. Over residues 493–508 the composition is skewed to acidic residues; it reads LEDDNEEEIESADQEE. One can recognise a PI-PLC Y-box domain in the interval 565-681; that stretch reads LSTMINYAQP…GYLLKPDFMR (117 aa). Residues 684-809 form the C2 domain; the sequence is DRTFDPFSET…SLRNEGNKPL (126 aa). Disordered stretches follow at residues 863 to 895 and 1082 to 1110; these read ADVP…ELRP and KISM…VREL. Composition is skewed to polar residues over residues 881–895 and 1085–1094; these read AKAN…ELRP and MENSKAISQD. Threonine 886 carries the phosphothreonine modification. Residues 1095 to 1109 are compositionally biased toward basic and acidic residues; sequence KSIKNKAERERRVRE.

Requires Ca(2+) as cofactor. As to expression, preferentially expressed in the retina.

It is found in the cell membrane. The enzyme catalyses a 1,2-diacyl-sn-glycero-3-phospho-(1D-myo-inositol-4,5-bisphosphate) + H2O = 1D-myo-inositol 1,4,5-trisphosphate + a 1,2-diacyl-sn-glycerol + H(+). It carries out the reaction a 1,2-diacyl-sn-glycero-3-phospho-(1D-myo-inositol) + H2O = 1D-myo-inositol 1-phosphate + a 1,2-diacyl-sn-glycerol + H(+). Its function is as follows. Activated phosphatidylinositol-specific phospholipase C enzymes catalyze the production of the second messenger molecules diacylglycerol (DAG) and inositol 1,4,5-trisphosphate (IP3) involved in G-protein coupled receptor signaling pathways. PLCB4 is a direct effector of the endothelin receptor signaling pathway that plays an essential role in lower jaw and middle ear structures development. The polypeptide is 1-phosphatidylinositol 4,5-bisphosphate phosphodiesterase beta-4 (Homo sapiens (Human)).